The primary structure comprises 278 residues: Cysteine-rich repeat secretory protein 18 (278 aa).

Positions 1-32 (MYSSSSVSKRFVLVPIVVVVTTQLLLVRNVSS) are cleaved as a signal peptide. 2 Gnk2-homologous domains span residues 39-147 (YLHH…SLDT) and 160-267 (PSAK…LYPF).

It belongs to the cysteine-rich repeat secretory protein family.

The protein localises to the secreted. This Arabidopsis thaliana (Mouse-ear cress) protein is Cysteine-rich repeat secretory protein 18 (CRRSP18).